The following is a 90-amino-acid chain: Small ribosomal subunit protein bS18 (90 aa).

The protein belongs to the bacterial ribosomal protein bS18 family. In terms of assembly, part of the 30S ribosomal subunit. Forms a tight heterodimer with protein bS6.

In terms of biological role, binds as a heterodimer with protein bS6 to the central domain of the 16S rRNA, where it helps stabilize the platform of the 30S subunit. This chain is Small ribosomal subunit protein bS18, found in Bordetella avium (strain 197N).